A 242-amino-acid chain; its full sequence is Carboxy-S-adenosyl-L-methionine synthase (242 aa).

S-adenosyl-L-methionine contacts are provided by residues Tyr39, Gly64–Ser66, Asp89–Asn90, Asp117–Ile118, Asn132, and Arg199.

It belongs to the class I-like SAM-binding methyltransferase superfamily. Cx-SAM synthase family. In terms of assembly, homodimer.

It carries out the reaction prephenate + S-adenosyl-L-methionine = carboxy-S-adenosyl-L-methionine + 3-phenylpyruvate + H2O. In terms of biological role, catalyzes the conversion of S-adenosyl-L-methionine (SAM) to carboxy-S-adenosyl-L-methionine (Cx-SAM). The protein is Carboxy-S-adenosyl-L-methionine synthase of Vibrio atlanticus (strain LGP32) (Vibrio splendidus (strain Mel32)).